The chain runs to 937 residues: AP-2 complex subunit beta (937 aa).

Thr2 bears the N-acetylthreonine mark. Ser4 is modified (phosphoserine). Position 265 is an N6-acetyllysine (Lys265). Phosphotyrosine; by SRC is present on Tyr737. Residues 841 to 937 (WKDIPNENEL…YQVYDSILKN (97 aa)) form an interaction with ARRB1 region. Tyr928 is subject to Phosphotyrosine.

It belongs to the adaptor complexes large subunit family. In terms of assembly, adaptor protein complex 2 (AP-2) is a heterotetramer composed of two large adaptins (alpha-type subunit AP2A1 or AP2A2 and beta-type subunit AP2B1), a medium adaptin (mu-type subunit AP2M1) and a small adaptin (sigma-type subunit AP2S1). Interacts with EPN1. Interacts with EPS15; clathrin competes with EPS15. Interacts with SNAP91; clathrin competes with SNAP91. Interacts with CLTC; clathrin competes with EPS15, SNAP91 and PIP5K1C. Interacts with LDLRAP1. Interacts with AMPH and BIN1. Interacts with ARF6 (GDP-bound). Interacts (dephosphorylated at Tyr-737) with ARRB1; phosphorylation of AP2B1 at Tyr-737 disrupts the interaction. Interacts with SLC2A8. Interacts with SCYL1 and SCYL2. Interacts with TGFBR1 and TGFBR2. Interacts with PIP5K1C; clathrin competes with PIP5K1C. Interacts with DENND1B, but not with DENND1A, nor DENND1C. Interacts with FCHO1. Interacts with RFTN1. Interacts with KIAA1107. Together with AP2A1 or AP2A2 and AP2M1, it interacts with ADAM10; this interaction facilitates ADAM10 endocytosis from the plasma membrane during long-term potentiation in hippocampal neurons. In terms of processing, phosphorylation at Tyr-737 by SRC occurs at the plasma membrane in clathrin-coated vesicles (CCVs). As to expression, expressed in the brain (at protein level).

It is found in the cell membrane. Its subcellular location is the membrane. The protein localises to the coated pit. Functionally, component of the adaptor protein complex 2 (AP-2). Adaptor protein complexes function in protein transport via transport vesicles in different membrane traffic pathways. Adaptor protein complexes are vesicle coat components and appear to be involved in cargo selection and vesicle formation. AP-2 is involved in clathrin-dependent endocytosis in which cargo proteins are incorporated into vesicles surrounded by clathrin (clathrin-coated vesicles, CCVs) which are destined for fusion with the early endosome. The clathrin lattice serves as a mechanical scaffold but is itself unable to bind directly to membrane components. Clathrin-associated adaptor protein (AP) complexes which can bind directly to both the clathrin lattice and to the lipid and protein components of membranes are considered to be the major clathrin adaptors contributing the CCV formation. AP-2 also serves as a cargo receptor to selectively sort the membrane proteins involved in receptor-mediated endocytosis. AP-2 seems to play a role in the recycling of synaptic vesicle membranes from the presynaptic surface. AP-2 recognizes Y-X-X-[FILMV] (Y-X-X-Phi) and [ED]-X-X-X-L-[LI] endocytosis signal motifs within the cytosolic tails of transmembrane cargo molecules. AP-2 may also play a role in maintaining normal post-endocytic trafficking through the ARF6-regulated, non-clathrin pathway. During long-term potentiation in hippocampal neurons, AP-2 is responsible for the endocytosis of ADAM10. The AP-2 beta subunit acts via its C-terminal appendage domain as a scaffolding platform for endocytic accessory proteins; at least some clathrin-associated sorting proteins (CLASPs) are recognized by their [DE]-X(1,2)-F-X-X-[FL]-X-X-X-R motif. The AP-2 beta subunit binds to clathrin heavy chain, promoting clathrin lattice assembly; clathrin displaces at least some CLASPs from AP2B1 which probably then can be positioned for further coat assembly. This is AP-2 complex subunit beta (AP2B1) from Homo sapiens (Human).